The following is a 475-amino-acid chain: U3 small nucleolar RNA-interacting protein 2 (475 aa).

The disordered stretch occupies residues 1 to 75 (MSATAAARKR…EEEEELEETA (75 aa)). The Nuclear localization signal signature appears at 8 to 40 (RKRGKPASGAGAGAGAGKRRRKADSAGDRGKSK). At arginine 10 the chain carries Omega-N-methylarginine. 2 positions are modified to N6-acetyllysine: lysine 12 and lysine 25. A phosphoserine mark is found at serine 50, serine 51, serine 53, and serine 57. The span at 65–74 (EEEEEELEET) shows a compositional bias: acidic residues. Lysine 113 participates in a covalent cross-link: Glycyl lysine isopeptide (Lys-Gly) (interchain with G-Cter in SUMO2). WD repeat units lie at residues 144–183 (GHQL…KLHV), 197–236 (GHSS…HLYT), 239–278 (GHRD…YVET), 281–320 (GHQD…QLVF), 322–360 (GHQG…PLAL), 374–413 (EQPF…RQLD), and 419–460 (PLVG…NSVC).

This sequence belongs to the WD repeat RRP9 family. Interacts specifically with the U3 small nucleolar RNA (U3 snoRNA). Binds a sub-fragment of the U3 snoRNA surrounding the B/C motif (3UBC). This association with the U3BC RNA is dependent on the binding of a protein called 15.5K to the box B/C motif. The association of the protein with the U3BC RNA was found to be also dependent on a conserved RNA structure that flanks the box B/C motif. Part of the small subunit (SSU) processome, composed of more than 70 proteins and the RNA chaperone small nucleolar RNA (snoRNA) U3. In terms of processing, acetylation at Lys-12 and Lys-25 by KAT2B/PCAF under stress impairs pre-rRNA processing. Deacetylation by SIRT7 enhances RRP9-binding to U3 snoRNA, which is a prerequisite for pre-rRNA processing.

The protein resides in the nucleus. It localises to the nucleolus. Component of a nucleolar small nuclear ribonucleoprotein particle (snoRNP) thought to participate in the processing and modification of pre-ribosomal RNA (pre-rRNA). Part of the small subunit (SSU) processome, first precursor of the small eukaryotic ribosomal subunit. During the assembly of the SSU processome in the nucleolus, many ribosome biogenesis factors, an RNA chaperone and ribosomal proteins associate with the nascent pre-rRNA and work in concert to generate RNA folding, modifications, rearrangements and cleavage as well as targeted degradation of pre-ribosomal RNA by the RNA exosome. The sequence is that of U3 small nucleolar RNA-interacting protein 2 from Homo sapiens (Human).